A 1415-amino-acid polypeptide reads, in one-letter code: DNA-directed RNA polymerase subunit beta' (1415 aa).

Positions 72, 74, 87, and 90 each coordinate Zn(2+). 3 residues coordinate Mg(2+): Asp-463, Asp-465, and Asp-467. 4 residues coordinate Zn(2+): Cys-811, Cys-885, Cys-892, and Cys-895.

This sequence belongs to the RNA polymerase beta' chain family. The RNAP catalytic core consists of 2 alpha, 1 beta, 1 beta' and 1 omega subunit. When a sigma factor is associated with the core the holoenzyme is formed, which can initiate transcription. Requires Mg(2+) as cofactor. The cofactor is Zn(2+).

The catalysed reaction is RNA(n) + a ribonucleoside 5'-triphosphate = RNA(n+1) + diphosphate. Its function is as follows. DNA-dependent RNA polymerase catalyzes the transcription of DNA into RNA using the four ribonucleoside triphosphates as substrates. This Cereibacter sphaeroides (strain ATCC 17025 / ATH 2.4.3) (Rhodobacter sphaeroides) protein is DNA-directed RNA polymerase subunit beta'.